A 205-amino-acid chain; its full sequence is Pre-rRNA-processing protein TSR2 (205 aa).

The tract at residues 144–205 (SKRVVHIEGD…LVQPKGRRKH (62 aa)) is disordered. The span at 152-177 (GDDDEDDEDVEDYDDEDEDEEMDEVV) shows a compositional bias: acidic residues.

The protein belongs to the TSR2 family. As to quaternary structure, interacts with RPS26A.

The protein resides in the cytoplasm. Its subcellular location is the nucleus. Functionally, required for 20S pre-rRNA processing. The polypeptide is Pre-rRNA-processing protein TSR2 (Saccharomyces cerevisiae (strain ATCC 204508 / S288c) (Baker's yeast)).